The sequence spans 488 residues: GTPase Der (488 aa).

2 consecutive EngA-type G domains span residues 3-166 (PVVA…AEAM) and 199-372 (IKLA…DSAT). Residues 9 to 16 (GRPNVGKS), 56 to 60 (DTGGI), 118 to 121 (NKID), 205 to 212 (GKPNVGKS), 252 to 256 (DTAGV), and 317 to 320 (NKWD) each bind GTP. A KH-like domain is found at 373–457 (RRVSTSMLTR…PIQLRFQEGD (85 aa)).

The protein belongs to the TRAFAC class TrmE-Era-EngA-EngB-Septin-like GTPase superfamily. EngA (Der) GTPase family. In terms of assembly, associates with the 50S ribosomal subunit.

GTPase that plays an essential role in the late steps of ribosome biogenesis. This chain is GTPase Der, found in Shewanella sp. (strain MR-7).